A 208-amino-acid chain; its full sequence is Cysteine-rich protein 2 (208 aa).

One can recognise an LIM zinc-binding 1 domain in the interval 5–57 (CPKCDKTVYFAEKVSSLGKDWHKFCLKCERCNKTLTPGGHAEHDGKPFCHKPC). Lys23 is modified (N6-acetyllysine). Ser104 bears the Phosphoserine mark. The 53-residue stretch at 126–178 (CPRCNKRVYFAEKVTSLGKDWHRPCLRCERCSKTLTPGGHAEHDGQPYCHKPC) folds into the LIM zinc-binding 2 domain. Residues Lys138 and Lys144 each carry the N6-acetyllysine modification.

Interacts with TGFB1I1. Expressed more abundantly in liver and kidney of females than that of males. Equally expressed in brain, lung and heart.

The sequence is that of Cysteine-rich protein 2 (Crip2) from Rattus norvegicus (Rat).